The sequence spans 508 residues: Photosystem II CP47 reaction center protein (508 aa).

The next 6 membrane-spanning stretches (helical) occupy residues 21-36 (AVHI…WAGS), 101-115 (IVFS…IWHW), 140-156 (GIHL…FGAF), 203-218 (IAAG…FHLS), 237-252 (VLSS…AFVV), and 457-472 (SFAL…HGAR).

It belongs to the PsbB/PsbC family. PsbB subfamily. PSII is composed of 1 copy each of membrane proteins PsbA, PsbB, PsbC, PsbD, PsbE, PsbF, PsbH, PsbI, PsbJ, PsbK, PsbL, PsbM, PsbT, PsbX, PsbY, PsbZ, Psb30/Ycf12, at least 3 peripheral proteins of the oxygen-evolving complex and a large number of cofactors. It forms dimeric complexes. The cofactor is Binds multiple chlorophylls. PSII binds additional chlorophylls, carotenoids and specific lipids..

The protein localises to the plastid. Its subcellular location is the chloroplast thylakoid membrane. Its function is as follows. One of the components of the core complex of photosystem II (PSII). It binds chlorophyll and helps catalyze the primary light-induced photochemical processes of PSII. PSII is a light-driven water:plastoquinone oxidoreductase, using light energy to abstract electrons from H(2)O, generating O(2) and a proton gradient subsequently used for ATP formation. The sequence is that of Photosystem II CP47 reaction center protein from Buxus microphylla (Littleleaf boxwood).